The chain runs to 354 residues: DNA polymerase IV (354 aa).

The region spanning 6–187 is the UmuC domain; it reads IIHVDCDCFY…LPVARLHGVG (182 aa). Mg(2+) is bound by residues aspartate 10 and aspartate 105. Glutamate 106 is a catalytic residue.

Belongs to the DNA polymerase type-Y family. In terms of assembly, monomer. Requires Mg(2+) as cofactor.

Its subcellular location is the cytoplasm. It catalyses the reaction DNA(n) + a 2'-deoxyribonucleoside 5'-triphosphate = DNA(n+1) + diphosphate. Its function is as follows. Poorly processive, error-prone DNA polymerase involved in untargeted mutagenesis. Copies undamaged DNA at stalled replication forks, which arise in vivo from mismatched or misaligned primer ends. These misaligned primers can be extended by PolIV. Exhibits no 3'-5' exonuclease (proofreading) activity. May be involved in translesional synthesis, in conjunction with the beta clamp from PolIII. The sequence is that of DNA polymerase IV from Pseudomonas putida (strain ATCC 700007 / DSM 6899 / JCM 31910 / BCRC 17059 / LMG 24140 / F1).